Consider the following 334-residue polypeptide: Protein U17/U16 (334 aa).

This sequence belongs to the herpesviridae US22 family. In terms of processing, isoform 1 is not glycosylated.

In terms of biological role, isoform 3 can transactivate the human immunodeficiency virus type 1 promoter. This chain is Protein U17/U16 (U17/U16), found in Homo sapiens (Human).